Here is a 1092-residue protein sequence, read N- to C-terminus: Leukemia inhibitory factor receptor (1092 aa).

The signal sequence occupies residues 1 to 43 (MAAYSWWRQPSWMVDNKRSRMTPNLPWLLSALTLLHLTMHANG). The Extracellular portion of the chain corresponds to 44-828 (LKRGVQDLKC…SMFVVTKENS (785 aa)). In terms of domain architecture, Fibronectin type-III 1 spans 45 to 126 (KRGVQDLKCT…QSKFTLNEKD (82 aa)). Intrachain disulfides connect Cys53-Cys63 and Cys80-Cys88. Asn164, Asn199, Asn238, and Asn261 each carry an N-linked (GlcNAc...) asparagine glycan. Cystine bridges form between Cys208-Cys265 and Cys336-Cys346. 5 Fibronectin type-III domains span residues 330–429 (VPQK…VAPH), 430–529 (DPTS…TEAT), 533–624 (GPDT…IPND), 622–714 (PNDD…IGYV), and 719–828 (PIVA…KENS). N-linked (GlcNAc...) asparagine glycans are attached at residues Asn385, Asn402, Asn421, Asn440, Asn453, and Asn476. The cysteines at positions 461 and 506 are disulfide-linked. The WSXWS motif motif lies at 514-518 (WSRWS). 6 N-linked (GlcNAc...) asparagine glycosylation sites follow: Asn567, Asn647, Asn658, Asn675, Asn724, and Asn782. The chain crosses the membrane as a helical span at residues 829 to 853 (VGLIIAILIPVAVAVIVGVVTSILC). The Cytoplasmic portion of the chain corresponds to 854-1092 (YRKREWIKET…TNFFQNKPND (239 aa)). Positions 864–872 (FYPDIPNPE) match the Box 1 motif motif. Phosphoserine is present on residues Ser922 and Ser1039. The disordered stretch occupies residues 1009-1092 (EDTAAEDEEG…TNFFQNKPND (84 aa)). Composition is skewed to polar residues over residues 1027–1062 (ANVNTWNLVSPDSPRSTDSNNEVVSFGSPCSINSRQ) and 1081–1092 (SFTNFFQNKPND).

The protein belongs to the type I cytokine receptor family. Type 2 subfamily. In terms of assembly, heterodimer composed of LIFR and IL6ST. The heterodimer formed by LIFR and IL6ST interacts with the complex formed by CNTF and CNTFR. Placenta, liver, kidney, heart, lung, brain, and embryos. The liver may be the primary site of synthesis of the secreted form.

It is found in the cell membrane. The protein localises to the secreted. Functionally, signal-transducing molecule. May have a common pathway with IL6ST. The soluble form inhibits the biological activity of LIF by blocking its binding to receptors on target cells. This is Leukemia inhibitory factor receptor (Lifr) from Mus musculus (Mouse).